The chain runs to 660 residues: Bifunctional polymyxin resistance protein ArnA (660 aa).

The formyltransferase ArnAFT stretch occupies residues 1–304 (MKAVIFAYHD…TLGLVAGARL (304 aa)). Histidine 104 functions as the Proton donor; for formyltransferase activity in the catalytic mechanism. (6R)-10-formyltetrahydrofolate is bound by residues arginine 114 and 136–140 (VKRAD). The dehydrogenase ArnADH stretch occupies residues 314 to 660 (RRIRVLILGV…RSVDVAERAS (347 aa)). NAD(+)-binding positions include aspartate 347 and 368–369 (DI). UDP-alpha-D-glucuronate contacts are provided by residues alanine 393, tyrosine 398, and 432 to 433 (TS). Glutamate 434 (proton acceptor; for decarboxylase activity) is an active-site residue. UDP-alpha-D-glucuronate is bound by residues arginine 460, asparagine 492, 526 to 535 (KLIDGGQQKR), and tyrosine 613. Arginine 619 acts as the Proton donor; for decarboxylase activity in catalysis.

The protein in the N-terminal section; belongs to the Fmt family. UDP-L-Ara4N formyltransferase subfamily. It in the C-terminal section; belongs to the NAD(P)-dependent epimerase/dehydratase family. UDP-glucuronic acid decarboxylase subfamily. Homohexamer, formed by a dimer of trimers.

The enzyme catalyses UDP-alpha-D-glucuronate + NAD(+) = UDP-beta-L-threo-pentopyranos-4-ulose + CO2 + NADH. It catalyses the reaction UDP-4-amino-4-deoxy-beta-L-arabinose + (6R)-10-formyltetrahydrofolate = UDP-4-deoxy-4-formamido-beta-L-arabinose + (6S)-5,6,7,8-tetrahydrofolate + H(+). Its pathway is nucleotide-sugar biosynthesis; UDP-4-deoxy-4-formamido-beta-L-arabinose biosynthesis; UDP-4-deoxy-4-formamido-beta-L-arabinose from UDP-alpha-D-glucuronate: step 1/3. It participates in nucleotide-sugar biosynthesis; UDP-4-deoxy-4-formamido-beta-L-arabinose biosynthesis; UDP-4-deoxy-4-formamido-beta-L-arabinose from UDP-alpha-D-glucuronate: step 3/3. It functions in the pathway bacterial outer membrane biogenesis; lipopolysaccharide biosynthesis. Its function is as follows. Bifunctional enzyme that catalyzes the oxidative decarboxylation of UDP-glucuronic acid (UDP-GlcUA) to UDP-4-keto-arabinose (UDP-Ara4O) and the addition of a formyl group to UDP-4-amino-4-deoxy-L-arabinose (UDP-L-Ara4N) to form UDP-L-4-formamido-arabinose (UDP-L-Ara4FN). The modified arabinose is attached to lipid A and is required for resistance to polymyxin and cationic antimicrobial peptides. In Salmonella heidelberg (strain SL476), this protein is Bifunctional polymyxin resistance protein ArnA.